The primary structure comprises 1004 residues: uncharacterized protein (1004 aa).

A glycan (N-linked (GlcNAc...) asparagine) is linked at N27. The next 4 membrane-spanning stretches (helical) occupy residues 38–58 (FGFS…LLAI), 77–97 (IVPD…LIVI), 188–208 (LSPV…LIAY), and 324–344 (FILM…SLFS). Residues N392, N418, and N421 are each glycosylated (N-linked (GlcNAc...) asparagine). Transmembrane regions (helical) follow at residues 422 to 442 (MSLS…VIAF) and 599 to 619 (MSNI…IIDM). The N-linked (GlcNAc...) asparagine glycan is linked to N627. Helical transmembrane passes span 726-746 (GYPL…ISVF) and 823-843 (GDYI…VLGS). N859 is a glycosylation site (N-linked (GlcNAc...) asparagine).

This sequence to yeast YPR031w.

It is found in the membrane. This is an uncharacterized protein from Schizosaccharomyces pombe (strain 972 / ATCC 24843) (Fission yeast).